Reading from the N-terminus, the 87-residue chain is Large ribosomal subunit protein bL27 (87 aa).

It belongs to the bacterial ribosomal protein bL27 family.

This Dichelobacter nodosus (strain VCS1703A) protein is Large ribosomal subunit protein bL27.